Here is a 301-residue protein sequence, read N- to C-terminus: Very-long-chain aldehyde decarbonylase GL1-10 (301 aa).

Helical transmembrane passes span 36 to 56, 94 to 114, and 187 to 207; these read VLFWHNILFLFVVFTLAPLPV, FFLVIGPLQLVSYPTVKMVGI, and SFVGPALAPGHMITFWLWIVL. One can recognise a Fatty acid hydroxylase domain in the interval 131 to 265; sequence LVYFLVEDYL…FTYCDYLYGT (135 aa).

Belongs to the sterol desaturase family. Homodimer. Expressed ubiquitously.

It is found in the endoplasmic reticulum membrane. The enzyme catalyses a long-chain fatty aldehyde + 2 NADPH + O2 + H(+) = a long-chain alkane + formate + 2 NADP(+) + H2O. Aldehyde decarbonylase involved in the conversion of aldehydes to alkanes. Core component of a very-long-chain alkane synthesis complex. This is Very-long-chain aldehyde decarbonylase GL1-10 from Oryza sativa subsp. japonica (Rice).